Here is an 80-residue protein sequence, read N- to C-terminus: Serine palmitoyltransferase small subunit A-B (80 aa).

Residues Met1–His21 are Cytoplasmic-facing. Residues Val22–Leu38 form a helical membrane-spanning segment. Topologically, residues Glu39–Arg43 are lumenal. Residues Thr44–Pro66 form a helical membrane-spanning segment. The Cytoplasmic portion of the chain corresponds to Gln67–Gln80.

This sequence belongs to the SPTSS family. SPTSSA subfamily. Component of the serine palmitoyltransferase (SPT) complex, which is composed of SPTLC1, SPTLC2 or SPTLC3 and SPTSSA or SPTSSB. The heterodimer consisting of SPTLC1 and SPTLC2/SPTLC3 forms the catalytic core of the enzyme, while SPTSSA or SPTSSB subunits determine substrate specificity. SPT also interacts with ORMDL proteins, especially ORMDL3, which negatively regulate SPT activity in the presence of ceramides.

It is found in the endoplasmic reticulum membrane. The protein operates within lipid metabolism; sphingolipid metabolism. In terms of biological role, component of the serine palmitoyltransferase multisubunit enzyme (SPT) that catalyzes the initial and rate-limiting step in sphingolipid biosynthesis by condensing L-serine and activated acyl-CoA (most commonly palmitoyl-CoA) to form long-chain bases. The SPT complex is composed of SPTLC1, SPTLC2 or SPTLC3 and SPTSSA or SPTSSB. Within this complex, the heterodimer consisting of SPTLC1 and SPTLC2/SPTLC3 forms the catalytic core. Within the SPT complex, SPTSSA stimulates the catalytic activity and plays a role in substrate specificity, which depends upon the overall complex composition. The SPTLC1-SPTLC2-SPTSSA complex shows a strong preference for C16-CoA substrate, while the SPTLC1-SPTLC3-SPTSSA isozyme uses both C14-CoA and C16-CoA as substrates, with a slight preference for C14-CoA. Independently of its action as a SPT component, may be involved in MBOAT7 localization to mitochondria-associated membranes, a membrane bridge between the endoplasmic reticulum and mitochondria, may hence affect MBOAT7-catalyzed incorporation of arachidonic acid into phosphatidylinositol. This Xenopus laevis (African clawed frog) protein is Serine palmitoyltransferase small subunit A-B (sptssa-b).